The sequence spans 308 residues: uncharacterized protein (308 aa).

Residues 1–17 (MKSLALLLSLLINFSIG) form the signal peptide. N-linked (GlcNAc...) asparagine glycosylation is found at Asn-13, Asn-91, Asn-159, and Asn-210. The interval 213–308 (DEISGGTGAG…HDNYISSFCT (96 aa)) is disordered. Gly residues-rich tracts occupy residues 217 to 231 (GGTG…GSGS) and 239 to 252 (SDGG…GSGS). Over residues 267–284 (NKNNNKNKNNNNNNNNYN) the composition is skewed to low complexity.

It localises to the secreted. This is an uncharacterized protein from Dictyostelium discoideum (Social amoeba).